A 437-amino-acid chain; its full sequence is Homogentisate 1,2-dioxygenase (437 aa).

The Proton acceptor role is filled by His295. His338 and Glu344 together coordinate Fe cation. The homogentisate site is built by Tyr353 and His374. Fe cation is bound at residue His374.

This sequence belongs to the homogentisate dioxygenase family. In terms of assembly, hexamer; dimer of trimers. Requires Fe cation as cofactor.

It carries out the reaction homogentisate + O2 = 4-maleylacetoacetate + H(+). Its pathway is amino-acid degradation; L-phenylalanine degradation; acetoacetate and fumarate from L-phenylalanine: step 4/6. Its function is as follows. Involved in the catabolism of homogentisate (2,5-dihydroxyphenylacetate or 2,5-OH-PhAc), a central intermediate in the degradation of phenylalanine and tyrosine. Catalyzes the oxidative ring cleavage of the aromatic ring of homogentisate to yield maleylacetoacetate. This is Homogentisate 1,2-dioxygenase from Myxococcus xanthus (strain DK1622).